The following is a 285-amino-acid chain: HTH-type transcriptional regulator MurR (285 aa).

An HTH rpiR-type domain is found at 1–77 (MLYLTKIRNA…MALIGEYSAS (77 aa)). Positions 37–56 (SRKMAKLLGISQSSIVKFAQ) form a DNA-binding region, H-T-H motif. An SIS domain is found at 128–268 (IIEAISKAPF…FVGLVQLNDV (141 aa)).

Homotetramer.

The protein operates within amino-sugar metabolism; N-acetylmuramate degradation [regulation]. Represses the expression of the murPQ operon involved in the uptake and degradation of N-acetylmuramic acid (MurNAc). Binds to two adjacent inverted repeats within the operator region. MurNAc 6-phosphate, the substrate of MurQ, is the specific inducer that weakens binding of MurR to the operator. The protein is HTH-type transcriptional regulator MurR of Escherichia coli O17:K52:H18 (strain UMN026 / ExPEC).